The chain runs to 360 residues: Heat-inducible transcription repressor HrcA (360 aa).

It belongs to the HrcA family.

In terms of biological role, negative regulator of class I heat shock genes (grpE-dnaK-dnaJ and groELS operons). Prevents heat-shock induction of these operons. This chain is Heat-inducible transcription repressor HrcA, found in Mesorhizobium japonicum (strain LMG 29417 / CECT 9101 / MAFF 303099) (Mesorhizobium loti (strain MAFF 303099)).